We begin with the raw amino-acid sequence, 143 residues long: Small ribosomal subunit protein uS12B (143 aa).

Pro62 is subject to 3,4-dihydroxyproline.

It belongs to the universal ribosomal protein uS12 family. Component of the small ribosomal subunit (SSU). Mature yeast ribosomes consist of a small (40S) and a large (60S) subunit. The 40S small subunit contains 1 molecule of ribosomal RNA (18S rRNA) and at least 33 different proteins. The large 60S subunit contains 3 rRNA molecules (25S, 5.8S and 5S rRNA) and at least 46 different proteins. In terms of processing, hydroxylation at Pro-62 affects translation termination efficiency.

The protein resides in the cytoplasm. Its subcellular location is the nucleus. It is found in the nucleolus. Functionally, component of the ribosome, a large ribonucleoprotein complex responsible for the synthesis of proteins in the cell. The small ribosomal subunit (SSU) binds messenger RNAs (mRNAs) and translates the encoded message by selecting cognate aminoacyl-transfer RNA (tRNA) molecules. The large subunit (LSU) contains the ribosomal catalytic site termed the peptidyl transferase center (PTC), which catalyzes the formation of peptide bonds, thereby polymerizing the amino acids delivered by tRNAs into a polypeptide chain. The nascent polypeptides leave the ribosome through a tunnel in the LSU and interact with protein factors that function in enzymatic processing, targeting, and the membrane insertion of nascent chains at the exit of the ribosomal tunnel. This Schizosaccharomyces pombe (strain 972 / ATCC 24843) (Fission yeast) protein is Small ribosomal subunit protein uS12B (rps2302).